Consider the following 275-residue polypeptide: 2,3,4,5-tetrahydropyridine-2,6-dicarboxylate N-succinyltransferase (275 aa).

2 residues coordinate substrate: Arg-104 and Asp-141.

The protein belongs to the transferase hexapeptide repeat family. As to quaternary structure, homotrimer.

The protein localises to the cytoplasm. The catalysed reaction is (S)-2,3,4,5-tetrahydrodipicolinate + succinyl-CoA + H2O = (S)-2-succinylamino-6-oxoheptanedioate + CoA. It functions in the pathway amino-acid biosynthesis; L-lysine biosynthesis via DAP pathway; LL-2,6-diaminopimelate from (S)-tetrahydrodipicolinate (succinylase route): step 1/3. The protein is 2,3,4,5-tetrahydropyridine-2,6-dicarboxylate N-succinyltransferase of Actinobacillus succinogenes (strain ATCC 55618 / DSM 22257 / CCUG 43843 / 130Z).